Reading from the N-terminus, the 251-residue chain is Tropomyosin-2 (251 aa).

The stretch at 1-251 (MSGEEKLGKL…DTVADEPDDE (251 aa)) forms a coiled coil.

This sequence belongs to the tropomyosin family. As to quaternary structure, homodimer. As to expression, striated muscle specific.

This Podocoryna carnea (Hydrozoan) protein is Tropomyosin-2 (TPM2).